The sequence spans 130 residues: Arsenical-resistance protein 2 (130 aa).

Positions 17–124 (QRKDFQVVDL…WETHCRESNL (108 aa)) constitute a Rhodanese domain.

In terms of biological role, involved in resistance to arsenic compounds. The protein is Arsenical-resistance protein 2 (ARR2) of Saccharomyces cerevisiae (strain ATCC 204508 / S288c) (Baker's yeast).